A 1035-amino-acid polypeptide reads, in one-letter code: DNA polymerase I B, mitochondrial (1035 aa).

The N-terminal 42 residues, 1–42 (MAVAPPLPPAPARLLRRWQGSSPWLSSSFGRTRYFSRPAFAA), are a transit peptide targeting the mitochondrion. The disordered stretch occupies residues 100-124 (TNGTTPLRVGNLRHDPSEDIRSSNY). Residues 111–120 (LRHDPSEDIR) show a composition bias toward basic and acidic residues. The 3'-5' exonuclease domain occupies 317-478 (FGNGKTCIWV…LYESLKNKLE (162 aa)). Residues 699–1032 (HAIAALCEVF…VDAKYAKSWY (334 aa)) are polymerase.

It belongs to the DNA polymerase type-A family.

It is found in the mitochondrion. The catalysed reaction is DNA(n) + a 2'-deoxyribonucleoside 5'-triphosphate = DNA(n+1) + diphosphate. With respect to regulation, not inhibited by aphidicolin. In addition to polymerase activity, this DNA polymerase exhibits 5'-3' exonuclease activity. May be required for DNA replication and accumulation in mitochondria. The sequence is that of DNA polymerase I B, mitochondrial from Oryza sativa subsp. japonica (Rice).